A 1129-amino-acid polypeptide reads, in one-letter code: Eukaryotic translation initiation factor 3 subunit A (1129 aa).

A PCI domain is found at 319 to 502; sequence LQRMAAHVLL…NSIYFGTDLT (184 aa). 2 disordered regions span residues 590–633 and 836–1129; these read NNAR…NEIQ and AAEA…VKRR. Composition is skewed to basic and acidic residues over residues 836–903, 923–964, 971–985, 994–1044, and 1053–1076; these read AAEA…RSER, DRND…KDTD, WRVRREPVEPQRERG, GRDD…DQPQ, and DSPRQNDRDNRDNRRPAGDRRDIR. The span at 1080–1091 shows a compositional bias: gly residues; that stretch reads PKEGGGGGGGGN. The span at 1098–1119 shows a compositional bias: basic and acidic residues; it reads PRDEKPPVKRDQPQDKENKAGD.

It belongs to the eIF-3 subunit A family. In terms of assembly, component of the eukaryotic translation initiation factor 3 (eIF-3) complex. The eIF-3 complex interacts with pix.

The protein localises to the cytoplasm. Functionally, RNA-binding component of the eukaryotic translation initiation factor 3 (eIF-3) complex, which is involved in protein synthesis of a specialized repertoire of mRNAs and, together with other initiation factors, stimulates binding of mRNA and methionyl-tRNAi to the 40S ribosome. The eIF-3 complex specifically targets and initiates translation of a subset of mRNAs involved in cell proliferation. This is Eukaryotic translation initiation factor 3 subunit A from Drosophila mojavensis (Fruit fly).